Consider the following 561-residue polypeptide: Putative transport protein YbjL (561 aa).

5 helical membrane passes run 8 to 28 (LLNG…LCLG), 32 to 52 (LGSV…LLGQ), 66 to 86 (FMLF…SIFF), 94 to 114 (MLAL…GKLF), and 158 to 178 (NLSL…IVGA). RCK C-terminal domains lie at 200-288 (RGLD…SFRN) and 292-373 (VFDR…RIGF). 5 helical membrane passes run 383 to 403 (LLAF…TFQF), 406 to 426 (FSFG…LGFL), 447 to 467 (FGLM…ISNG), 475 to 495 (MLIA…LFGA), and 540 to 560 (AIAN…WPGL).

This sequence belongs to the AAE transporter (TC 2.A.81) family. YbjL subfamily.

It is found in the cell membrane. This Salmonella typhi protein is Putative transport protein YbjL.